The sequence spans 242 residues: ATP synthase subunit a (242 aa).

6 helical membrane-spanning segments follow: residues 29–49 (SSIYMLLASILALTYFYLAFY), 84–104 (FIPLVFSLFIFILFCNLLGMT), 114–134 (IIVTFTLAILVFLIVTIVGFV), 140–160 (FLTLFLPHGTPLWLAPLIIVI), 181–201 (MAGHVLLKVIAGFTVSLMIYL), and 203–223 (FLPIPIMVILIGFEIFVAILQ).

Belongs to the ATPase A chain family. In terms of assembly, F-type ATPases have 2 components, CF(1) - the catalytic core - and CF(0) - the membrane proton channel. CF(1) has five subunits: alpha(3), beta(3), gamma(1), delta(1), epsilon(1). CF(0) has three main subunits: a(1), b(2) and c(9-12). The alpha and beta chains form an alternating ring which encloses part of the gamma chain. CF(1) is attached to CF(0) by a central stalk formed by the gamma and epsilon chains, while a peripheral stalk is formed by the delta and b chains.

The protein resides in the cell inner membrane. Key component of the proton channel; it plays a direct role in the translocation of protons across the membrane. This Rickettsia peacockii (strain Rustic) protein is ATP synthase subunit a.